The chain runs to 188 residues: Protein GrpE 2 (188 aa).

The span at 1 to 29 shows a compositional bias: basic and acidic residues; it reads MDNQEKKTNYQNTDKENDLEKNKEKKNDE. A disordered region spans residues 1-33; sequence MDNQEKKTNYQNTDKENDLEKNKEKKNDESIFQ.

Belongs to the GrpE family. Homodimer.

The protein localises to the cytoplasm. Participates actively in the response to hyperosmotic and heat shock by preventing the aggregation of stress-denatured proteins, in association with DnaK and GrpE. It is the nucleotide exchange factor for DnaK and may function as a thermosensor. Unfolded proteins bind initially to DnaJ; upon interaction with the DnaJ-bound protein, DnaK hydrolyzes its bound ATP, resulting in the formation of a stable complex. GrpE releases ADP from DnaK; ATP binding to DnaK triggers the release of the substrate protein, thus completing the reaction cycle. Several rounds of ATP-dependent interactions between DnaJ, DnaK and GrpE are required for fully efficient folding. The chain is Protein GrpE 2 from Buchnera aphidicola subsp. Schizaphis graminum (strain Sg).